Here is a 150-residue protein sequence, read N- to C-terminus: uncharacterized protein (150 aa).

This is an uncharacterized protein from Acidianus filamentous virus 1 (isolate United States/Yellowstone) (AFV-1).